Here is a 157-residue protein sequence, read N- to C-terminus: SsrA-binding protein (157 aa).

The protein belongs to the SmpB family.

The protein localises to the cytoplasm. Required for rescue of stalled ribosomes mediated by trans-translation. Binds to transfer-messenger RNA (tmRNA), required for stable association of tmRNA with ribosomes. tmRNA and SmpB together mimic tRNA shape, replacing the anticodon stem-loop with SmpB. tmRNA is encoded by the ssrA gene; the 2 termini fold to resemble tRNA(Ala) and it encodes a 'tag peptide', a short internal open reading frame. During trans-translation Ala-aminoacylated tmRNA acts like a tRNA, entering the A-site of stalled ribosomes, displacing the stalled mRNA. The ribosome then switches to translate the ORF on the tmRNA; the nascent peptide is terminated with the 'tag peptide' encoded by the tmRNA and targeted for degradation. The ribosome is freed to recommence translation, which seems to be the essential function of trans-translation. This is SsrA-binding protein from Bacillus licheniformis (strain ATCC 14580 / DSM 13 / JCM 2505 / CCUG 7422 / NBRC 12200 / NCIMB 9375 / NCTC 10341 / NRRL NRS-1264 / Gibson 46).